A 1257-amino-acid chain; its full sequence is Probable aldehyde oxidase gad-3 (1257 aa).

The region spanning 4-91 is the 2Fe-2S ferredoxin-type domain; the sequence is TGIFFNVNGK…KTFVITVEGV (88 aa). Cysteine 43, cysteine 48, cysteine 51, and cysteine 73 together coordinate [2Fe-2S] cluster. The FAD-binding PCMH-type domain maps to 229–459; the sequence is LKGDRIELLL…TSLEVHIDAL (231 aa). The Proton acceptor role is filled by glutamate 1208.

This sequence belongs to the xanthine dehydrogenase family. The cofactor is [2Fe-2S] cluster. FAD serves as cofactor. Requires Mo-molybdopterin as cofactor.

It catalyses the reaction an aldehyde + O2 + H2O = a carboxylate + H2O2 + H(+). Functionally, may be involved in the metabolism of 1-methylnicotinamide (MNA). Linked to regulation of longevity through generation of reactive oxygen species, where it probably functions in a pathway downstream of the sirtuin sir-2.1 and the nicotinamide N-methyltransferase anmt-1. This chain is Probable aldehyde oxidase gad-3, found in Caenorhabditis elegans.